Consider the following 396-residue polypeptide: Trypacidin cluster transcription factor (396 aa).

The zn(2)-C6 fungal-type DNA-binding region spans 20-47 (CRACGLSKVRCSKEKPTCSRCRRRGTVC). 3 disordered regions span residues 54–120 (RPGR…LSTV), 190–218 (DPAP…ESEA), and 346–365 (MHGA…PAPL). The span at 57 to 71 (RKPDSRSEVEPEPGH) shows a compositional bias: basic and acidic residues. Over residues 72–82 (LSHPLPSPESS) the composition is skewed to low complexity.

In terms of tissue distribution, specifically expressed in conidia.

It localises to the nucleus. Transcription factor that regulates the expression of the gene clusters that mediate the biosynthesis of trypacidin, a metabolite with antiprotozoal activity and a possible role in the infection process. Trypacidin is toxic for human pulmonary and bronchial epithelial cells by initiating the intracellular formation of nitric oxide (NO) and hydrogen peroxide (H(2)O(2)), thus triggering host necrotic cell death. The protein is Trypacidin cluster transcription factor of Aspergillus fumigatus (strain ATCC MYA-4609 / CBS 101355 / FGSC A1100 / Af293) (Neosartorya fumigata).